Reading from the N-terminus, the 431-residue chain is Enolase (431 aa).

Residues 27 to 47 (LESGHSGRAAVPSGASTGSRE) are disordered. Gln163 contacts (2R)-2-phosphoglycerate. The active-site Proton donor is Glu205. The Mg(2+) site is built by Asp242, Glu285, and Asp312. The (2R)-2-phosphoglycerate site is built by Lys337, Arg366, Ser367, and Lys388. Lys337 functions as the Proton acceptor in the catalytic mechanism.

It belongs to the enolase family. It depends on Mg(2+) as a cofactor.

Its subcellular location is the cytoplasm. It localises to the secreted. It is found in the cell surface. It catalyses the reaction (2R)-2-phosphoglycerate = phosphoenolpyruvate + H2O. It functions in the pathway carbohydrate degradation; glycolysis; pyruvate from D-glyceraldehyde 3-phosphate: step 4/5. Catalyzes the reversible conversion of 2-phosphoglycerate (2-PG) into phosphoenolpyruvate (PEP). It is essential for the degradation of carbohydrates via glycolysis. The chain is Enolase from Oleidesulfovibrio alaskensis (strain ATCC BAA-1058 / DSM 17464 / G20) (Desulfovibrio alaskensis).